A 1489-amino-acid polypeptide reads, in one-letter code: MSTIHQVNEMNSRVGEKPACCIGAARGHCTAHCPRIEDVLYSQRKGKTNKGAQRWRCKACGTKWTSKGIIIQPPVVPDTIVNSIGFGNGPEEISMEQLRANARPYKKTKTGDNILQTSPFPSLFGNSIGMGLGGNNNNINNNNNSNGSNSSNNSHNGGSSPSGSPIPSPPSPVSFLQRNSNVFVPILPQSNGNNINNNNNNNSNSNSNNINSNSSNSMQLQNNNNNNGQLRSSSSSLSLSSSSSQLNSSSNGNGSSRNLLTSQKSAQSLIGNINNNNNNNNIINNNSNNNTNNNNNIMNGTTTSTTKPVVVGGPMQILNSVVNNSPTSSKPILSSSSQNLLYNSSGSIPQPSQSPQNNNNTTINNNNNTTNNNNNNNNSNNNNNSNNNNNNSNNNNINNVANGTPRPSLQTSRLQGKLPSPQQYNTSPSHQQYPSPKNNNNSNNIIPIQSTYGQPTPPPTKPPVSSKAPAVYHNVRVPSPNTTVDNNNNNNNNNNNNNNNNNNNNNNNNNNNSNNNNNSNNNNNNINNNNNNNNNSNNNNNGNSNNNNNNNSNYQQQHQYFSPNQNYIQQQVQAVQTQQAQHILAQQQAQAQQQYIQQLQLQQQTLAHAQSQAAHQAQTLTHSRHNDLLSPIDSQIWAPIQYSWIQTHYNPSSSLLECLKRLINSVVVFSNELPVDQRLKMINFLTTLSSPSSESQYNTNASKQMLNCIDNSVFNITKHYQMLYQSISKHYSMMEDSFIPLTEVYFDENEINKFIHFSDQFKIIEEQFEFILRELSSIRDTLIIKRENIEKNIIESSKFLNNSSNNDNGIEEIGLEQAKQDTTRLLESLAPLETTLNSMEIKFKSIQKEISMVIRVFSFFELLYNIHINCHQTIVEKHSRQLSTYMIDVIQQSLYNCDVISVAYNRLKTGLFNSNNNNNNNNNNNNNNNEEDDQLIDTTNPFINKLSDLLSKYENISKNNNNNNNNNNNNNNNNNNNNNNNNNNNNNNRNRDRDREFERDNNSNNNNNNIEKERNRNNRIRDRDNMDIDNISSFISNNQQQHIGQSQSVQQSSQLPKERKVMALYHTTCLDHLVPDDHPESPKRLSSVIKAINDFSRQSDRLIIKNDPEEINDKWILTVHSPEYLRLLEDLTEKLDANEIRPLNVNNDGASTGINQFSTSTPITTTGTATVTPGSTTSSTNGEQCEDGDTFVSKLSLHAAKRSAGATCQAIDNVMKGNVTSAFVAARPPGHHAGRDGLTSGTSSQGFCLLNHVCIGAKYAQLKYNLDKIAIIDFDVHHGNGTEEILSNDQGFYFLSIHMFEEGFYPGSGGGVGSIGVVNLNEFNEQNDYDDDDNNNDVNNNNNNNNNNNNNNNNNNNNKNNNNNNSNSITQQSTITNNSNCKGNIVNIPLDPKSSASSFLKAFSIIIDKLNDYQPELILISCGFDAHMEDHLASLCLLEENYVEITRSLRRVADRWCKGRLVSILEGGYNINALRQCTIAHLSALSEDD.

Low complexity-rich tracts occupy residues 135–163 (NNNN…SPSG), 190–259 (SNGN…SRNL), 281–306 (NIIN…TSTT), and 325–399 (SPTS…NINN). Disordered stretches follow at residues 135 to 259 (NNNN…SRNL), 281 to 556 (NIIN…NYQQ), 915 to 935 (NNNN…DDQL), 955 to 1024 (NISK…RDRD), and 1151 to 1185 (STGI…GEQC). Polar residues predominate over residues 400-430 (VANGTPRPSLQTSRLQGKLPSPQQYNTSPSH). 4 stretches are compositionally biased toward low complexity: residues 431 to 450 (QQYP…PIQS), 486 to 553 (NNNN…NNSN), 915 to 928 (NNNN…NNNN), and 959 to 988 (NNNN…NNNN). Basic and acidic residues-rich tracts occupy residues 989–1001 (RNRD…ERDN) and 1010–1024 (IEKE…RDRD). The segment covering 1158–1180 (STSTPITTTGTATVTPGSTTSST) has biased composition (low complexity). H1232 functions as the Proton acceptor in the catalytic mechanism. Residues 1325 to 1335 (EQNDYDDDDNN) are compositionally biased toward acidic residues. The tract at residues 1325 to 1374 (EQNDYDDDDNNNDVNNNNNNNNNNNNNNNNNNNNKNNNNNNSNSITQQST) is disordered. Positions 1336–1367 (NDVNNNNNNNNNNNNNNNNNNNNKNNNNNNSN) are enriched in low complexity.

This sequence belongs to the histone deacetylase family. HD type 2 subfamily.

The protein localises to the nucleus. Its subcellular location is the cytoplasm. It catalyses the reaction N(6)-acetyl-L-lysyl-[histone] + H2O = L-lysyl-[histone] + acetate. In terms of biological role, responsible for the deacetylation of lysine residues on the N-terminal part of the core histones (H2A, H2B, H3 and H4). Histone deacetylation plays an important role in transcriptional regulation, cell cycle progression and developmental events. Histone deacetylases act via the formation of large multiprotein complexes. The protein is Type-2 histone deacetylase 1 (hdaD) of Dictyostelium discoideum (Social amoeba).